Here is a 119-residue protein sequence, read N- to C-terminus: Large ribosomal subunit protein bL19 (119 aa).

Belongs to the bacterial ribosomal protein bL19 family.

In terms of biological role, this protein is located at the 30S-50S ribosomal subunit interface and may play a role in the structure and function of the aminoacyl-tRNA binding site. In Pseudoalteromonas atlantica (strain T6c / ATCC BAA-1087), this protein is Large ribosomal subunit protein bL19.